The sequence spans 776 residues: Zinc finger CCCH-type antiviral protein 1 (776 aa).

The residue at position 2 (Ala-2) is an N-acetylalanine. The N-terminal domain stretch occupies residues 2–254 (ADPGVCCFIT…DRSKSRDRFL (253 aa)). Positions 69-76 (RARVCRRK) match the Nuclear localization signal motif. C3H1-type zinc fingers lie at residues 73–86 (CRRKYCQRPCDSLH), 88–110 (CKLNLLGRCHYAQSQRNLCKYSH), 150–172 (CKSYKGEGRKQTCGQPQPCERLH), and 169–193 (ERLHICEHFTRGNCSYLNCLRSHNL). Residues 221 to 249 (NKHARRNPPGTRAAHPHRRGGAHRDRSKS) form a disordered region. The segment at 224–254 (ARRNPPGTRAAHPHRRGGAHRDRSKSRDRFL) is binding to EXOSC5. A phosphoserine; by GSK3-beta mark is found at Ser-257, Ser-262, Ser-266, and Ser-270. Ser-274 is subject to Phosphoserine. Thr-278 carries the phosphothreonine modification. Ser-283 carries the phosphoserine modification. Positions 284 to 291 (LEDVSVDV) match the Nuclear export signal motif. The tract at residues 308 to 355 (PVSSKAAGVQGPSQMRASQEFSEDGNLDDIFSRNRSDSSSSRASAAKV) is disordered. Over residues 318–327 (GPSQMRASQE) the composition is skewed to polar residues. Phosphoserine occurs at positions 325, 351, and 398. The segment covering 344–353 (DSSSSRASAA) has biased composition (low complexity). The Nuclear localization signal motif lies at 405–406 (KK). Positions 457 to 483 (WASASTHNAPNGSSQIMDETPNVSKSS) are disordered. A compositionally biased stretch (polar residues) spans 459–483 (SASTHNAPNGSSQIMDETPNVSKSS). Tyr-501 bears the Phosphotyrosine mark. A disordered region spans residues 512–562 (LAVPGEATTPVQSNRLPQSPLSSSSHRAAASGSPGKNSTHTSVSPAIESSR). The segment covering 523 to 546 (QSNRLPQSPLSSSSHRAAASGSPG) has biased composition (low complexity). Phosphoserine occurs at positions 544 and 667. The WWE domain occupies 671-758 (YEEKPLSAVF…ASKTQRHVVR (88 aa)).

Belongs to the ARTD/PARP family. In terms of assembly, homodimer or homooligomer. Homooligomerization is essential for its antiviral activity. Interacts with EXOSC5. Interacts with EXOSC3, EXOSC7, DCP2 and DCP1A. Interacts with PARN in an RNA-independent manner. Interacts with XRN1 in an RNA-dependent manner. Interacts (via N-terminal domain) with DHX30 (via N-terminus) in an RNA-independent manner. Interacts (via N-terminal domain) with DDX17 in an RNA-independent manner. Phosphorylation at Ser-274 is essential for sequential phosphorylation of Ser-270, Ser-266, Ser-262 and Ser-257 by GSK3-beta. Phosphorylation by GSK3-beta enhances its antiviral activity. As to expression, expressed in the kidney and liver.

The protein resides in the cytoplasm. It localises to the nucleus. Functionally, antiviral protein which inhibits the replication of viruses by recruiting the cellular RNA degradation machineries to degrade the viral mRNAs. Binds to a ZAP-responsive element (ZRE) present in the target viral mRNA, recruits cellular poly(A)-specific ribonuclease PARN to remove the poly(A) tail, and the 3'-5' exoribonuclease complex exosome to degrade the RNA body from the 3'-end. It also recruits the decapping complex DCP1-DCP2 through RNA helicase p72 (DDX17) to remove the cap structure of the viral mRNA to initiate its degradation from the 5'-end. Its target viruses belong to families which include retroviridae: human immunodeficiency virus type 1 (HIV-1) and moloney and murine leukemia virus (MoMLV), filoviridae: ebola virus (EBOV) and marburg virus (MARV), togaviridae: sindbis virus (SINV) and Ross river virus (RRV). Specifically targets the multiply spliced but not unspliced or singly spliced HIV-1 mRNAs for degradation. The protein is Zinc finger CCCH-type antiviral protein 1 (Zc3hav1) of Rattus norvegicus (Rat).